A 229-amino-acid polypeptide reads, in one-letter code: Sodium channel modifier 1 (229 aa).

S2 carries the post-translational modification Phosphoserine. The short motif at 4–20 (KREGDDWSQLNVLKKRR) is the Bipartite nuclear localization signal element. The Matrin-type zinc finger occupies 42–74 (FACAICPHRPVLDTLAMLTAHRAGKKHLSSLKL). K67 is covalently cross-linked (Glycyl lysine isopeptide (Lys-Gly) (interchain with G-Cter in SUMO2)). Disordered stretches follow at residues 80–105 (QTGK…EAPL) and 128–187 (RRKH…TKRR). Residues 82 to 92 (GKGTEQNPRQQ) show a composition bias toward polar residues. Residues 157 to 171 (ISKEPEPRERSDAKE) show a composition bias toward basic and acidic residues. Phosphoserine is present on residues S182 and S218. The tract at residues 187 to 229 (RVLNHYLTLRSSGWVPDGRGRWIKDENVEFDSDEEEPPDLPLD) is required for interaction with LUC7L2.

In terms of assembly, component of the minor spliceosome. Within this complex, interacts with RNF113A, as well as with SF3B1/SF3b155, SF3B2/SF3b145, SF3B3/SF3b130 and CDC5L. May interact with LUC7L2 and SNRNP70.

The protein localises to the nucleus. It is found in the nucleoplasm. The protein resides in the nucleus speckle. Functionally, as a component of the minor spliceosome, involved in the splicing of U12-type introns in pre-mRNAs. Plays a role in the regulation of primary cilia length and Hedgehog signaling. This is Sodium channel modifier 1 (Scnm1) from Mus musculus (Mouse).